A 157-amino-acid chain; its full sequence is Endoribonuclease YbeY (157 aa).

H114, H118, and H124 together coordinate Zn(2+).

This sequence belongs to the endoribonuclease YbeY family. Requires Zn(2+) as cofactor.

The protein resides in the cytoplasm. In terms of biological role, single strand-specific metallo-endoribonuclease involved in late-stage 70S ribosome quality control and in maturation of the 3' terminus of the 16S rRNA. The chain is Endoribonuclease YbeY from Salmonella paratyphi A (strain AKU_12601).